The chain runs to 644 residues: Pentatricopeptide repeat-containing protein At1g12775, mitochondrial (644 aa).

The N-terminal 53 residues, 1 to 53 (MVRMMIRRLSSQASRFVQPRLLETGTLRIALINCPNELLFCCERGFSTFSDRN), are a transit peptide targeting the mitochondrion. PPR repeat units follow at residues 87-121 (TVID…GIAH), 122-156 (SIYT…GYEP), 157-191 (DTVI…GHKP), 192-226 (TLIT…GFQP), 227-261 (NEVT…NIKL), 262-296 (DAVK…GFKA), 297-331 (DIIT…KISP), 332-366 (NVVT…GIAP), 367-401 (NTIT…GCDP), 402-436 (DIMT…GVIA), 437-471 (NTVT…RVRP), 472-506 (DIVS…KMEL), 507-541 (DIGI…GVKL), 542-576 (DARA…GHAP), and 577-611 (DELT…GFPA).

This sequence belongs to the PPR family. P subfamily.

The protein localises to the mitochondrion. The polypeptide is Pentatricopeptide repeat-containing protein At1g12775, mitochondrial (Arabidopsis thaliana (Mouse-ear cress)).